We begin with the raw amino-acid sequence, 660 residues long: Interferon-induced GTP-binding protein Mx1 (660 aa).

Met1 is modified (N-acetylmethionine). Positions 1 to 10 are enriched in basic and acidic residues; that stretch reads MVHSEAKMTR. A disordered region spans residues 1-29; the sequence is MVHSEAKMTRPDSASASKQQLLNGNADIQ. Over residues 12-29 the composition is skewed to polar residues; it reads DSASASKQQLLNGNADIQ. A Dynamin-type G domain is found at 67–340; that stretch reads DLALPAIAVI…LITHISKSLP (274 aa). Residues 77 to 84 form a G1 motif region; sequence GDQSSGKS. 77–84 serves as a coordination point for GTP; it reads GDQSSGKS. The interval 102–104 is G2 motif; that stretch reads VTR. Residues 178-181 form a G3 motif region; it reads DLPG. GTP is bound by residues 178–182 and 247–250; these read DLPGI and TKPD. Residues 247–250 form a G4 motif region; sequence TKPD. A G5 motif region spans residues 279-282; the sequence is KCRG. Residues 341-366 form a bundle signaling element (BSE) region; the sequence is LLENQIKESYQNLSDELQKYGTDIPE. A middle domain region spans residues 366-533; sequence EDETEKTFFL…HFQMEKIVYC (168 aa). The interval 367-630 is stalk; that stretch reads DETEKTFFLI…RDTYDWLLKE (264 aa). Positions 554–557 are critical for lipid-binding; it reads KKKK. A GED domain is found at 572-660; sequence MAEILEHLNA…ARRRLAKFPG (89 aa).

Belongs to the TRAFAC class dynamin-like GTPase superfamily. Dynamin/Fzo/YdjA family. In terms of assembly, homooligomer. Oligomerizes into multimeric filamentous or ring-like structures by virtue of its stalk domain. Oligomerization is critical for GTPase activity, protein stability, and recognition of viral target structures. Interacts with TRPC1, TRPC3, TRPC4, TRPC5, TRPC6 and TRPC7. Interacts with HSPA5. Interacts with TUBB/TUBB5. Interacts with DDX39A and DDX39B. In terms of processing, ISGylated.

The protein resides in the cytoplasm. It is found in the endoplasmic reticulum membrane. It localises to the perinuclear region. Its function is as follows. Interferon-induced dynamin-like GTPase with antiviral activity. This is Interferon-induced GTP-binding protein Mx1 (MX1) from Equus caballus (Horse).